The following is a 316-amino-acid chain: MSDISKASLPKAIFLMGPTASGKTALAIELRKILPVELISVDSALIYKGMDIGTAKPNAEELLAAPHRLLNIRDPSQAYSAADFRRDALAEMADITAAGRIPLLVGGTMLYFKALLEGLSPLPSADPEVRARIEQQAAEQGWESLHRQLQEIDPVAAARIHPNDPQRLSRALEVFFISGKTLTELTQTSGDALPYQVHQFAIAPASRELLHQRIEQRFHQMLASGFEAEVRALFARGDLHTDLPSIRCVGYRQMWSYLEGEISYDEMVYRGVCATRQLAKRQITWLRGWEGVHWLDSEKPEQARDEVLQVVGAIAG.

Residue 17–24 (GPTASGKT) coordinates ATP. 19-24 (TASGKT) serves as a coordination point for substrate. 4 interaction with substrate tRNA regions span residues 42–45 (DSAL), 166–170 (QRLSR), 247–252 (RCVGYR), and 280–287 (KRQITWLR).

This sequence belongs to the IPP transferase family. In terms of assembly, monomer. Requires Mg(2+) as cofactor.

It catalyses the reaction adenosine(37) in tRNA + dimethylallyl diphosphate = N(6)-dimethylallyladenosine(37) in tRNA + diphosphate. In terms of biological role, catalyzes the transfer of a dimethylallyl group onto the adenine at position 37 in tRNAs that read codons beginning with uridine, leading to the formation of N6-(dimethylallyl)adenosine (i(6)A). In Escherichia coli O81 (strain ED1a), this protein is tRNA dimethylallyltransferase.